A 137-amino-acid polypeptide reads, in one-letter code: Large ribosomal subunit protein uL16c (137 aa).

Belongs to the universal ribosomal protein uL16 family. Part of the 50S ribosomal subunit.

The protein localises to the plastid. The protein is Large ribosomal subunit protein uL16c of Cuscuta exaltata (Tall dodder).